A 408-amino-acid polypeptide reads, in one-letter code: Exodeoxyribonuclease 7 large subunit (408 aa).

This sequence belongs to the XseA family. In terms of assembly, heterooligomer composed of large and small subunits.

Its subcellular location is the cytoplasm. It carries out the reaction Exonucleolytic cleavage in either 5'- to 3'- or 3'- to 5'-direction to yield nucleoside 5'-phosphates.. Functionally, bidirectionally degrades single-stranded DNA into large acid-insoluble oligonucleotides, which are then degraded further into small acid-soluble oligonucleotides. The protein is Exodeoxyribonuclease 7 large subunit of Alkaliphilus oremlandii (strain OhILAs) (Clostridium oremlandii (strain OhILAs)).